A 250-amino-acid chain; its full sequence is Putative ankyrin repeat protein RBE_0623 (250 aa).

ANK repeat units follow at residues 70 to 99 (IGDSLPLVAVKNNNLDMLKMLLSCGFEPNT), 104 to 134 (NCYTPLWYVTYKGYTNSVRKLLEYPINNINE), and 137 to 166 (GKETPLKSALIHKHTEIAKLLIDKINPDKF).

The sequence is that of Putative ankyrin repeat protein RBE_0623 from Rickettsia bellii (strain RML369-C).